The sequence spans 133 residues: Complexin-1 (133 aa).

2 disordered regions span residues 1–40 (MDFVMKQALGGATKDMGKMLGGDEEKDPDAEKKEEERLEA) and 85–112 (AMEAQAEGSLTRPKKAIPAGCGDEDEEE). The segment covering 15 to 40 (DMGKMLGGDEEKDPDAEKKEEERLEA) has biased composition (basic and acidic residues). Residues 28–60 (PDAEKKEEERLEALRQAEEERAGKYAKMEAERE) are a coiled coil.

It belongs to the complexin/synaphin family. As to quaternary structure, binds to the SNARE core complex containing SNAP25, VAMP2 and syntaxin-1. In terms of tissue distribution, nervous system. Present in electric organ (at protein level).

It localises to the cytoplasm. The protein localises to the cytosol. In terms of biological role, positively regulates a late step in synaptic vesicle exocytosis. The protein is Complexin-1 of Narke japonica (Japanese sleeper ray).